A 364-amino-acid chain; its full sequence is Chorismate synthase (364 aa).

Residues Arg-47 and Arg-53 each contribute to the NADP(+) site. Residues Arg-124–Ser-126, Gly-286, Lys-301–Thr-305, and Arg-327 each bind FMN.

It belongs to the chorismate synthase family. Homotetramer. FMNH2 is required as a cofactor.

It carries out the reaction 5-O-(1-carboxyvinyl)-3-phosphoshikimate = chorismate + phosphate. The protein operates within metabolic intermediate biosynthesis; chorismate biosynthesis; chorismate from D-erythrose 4-phosphate and phosphoenolpyruvate: step 7/7. Functionally, catalyzes the anti-1,4-elimination of the C-3 phosphate and the C-6 proR hydrogen from 5-enolpyruvylshikimate-3-phosphate (EPSP) to yield chorismate, which is the branch point compound that serves as the starting substrate for the three terminal pathways of aromatic amino acid biosynthesis. This reaction introduces a second double bond into the aromatic ring system. This is Chorismate synthase from Acaryochloris marina (strain MBIC 11017).